The primary structure comprises 391 residues: E3 ubiquitin-protein ligase RMND5A (391 aa).

The region spanning 114–146 is the LisH domain; sequence SQQILSEVMVEHFFRQGMLDVAEELCQEAGLSI. In terms of domain architecture, CTLH spans 153–210; that stretch reads PFVELNRILEALKVRVLRPALEWAVSNREMLMAQNSSLEFKLHRLYFISLLMGGTVNQ. Residues 336 to 377 form an RING-Gid-type zinc finger; it reads CPILRQQTTDNNPPMKLVCGHIISRDALNKMFNGSKLKCPYC.

Identified in the CTLH complex that contains at least RANBP9, MKLN1, MAEA, RMND5A, GID8 and ARMC8.

It is found in the nucleus. It localises to the nucleoplasm. The protein resides in the cytoplasm. It carries out the reaction S-ubiquitinyl-[E2 ubiquitin-conjugating enzyme]-L-cysteine + [acceptor protein]-L-lysine = [E2 ubiquitin-conjugating enzyme]-L-cysteine + N(6)-ubiquitinyl-[acceptor protein]-L-lysine.. In terms of biological role, E3 ubiquitin-protein ligase component of the CTLH complex. The protein is E3 ubiquitin-protein ligase RMND5A (rmnd5a) of Xenopus tropicalis (Western clawed frog).